A 954-amino-acid polypeptide reads, in one-letter code: Centrosomal protein of 112 kDa (954 aa).

Residues 276–954 are a coiled coil; it reads QKHDAEVQKI…EELTTYQSRR (679 aa).

The protein localises to the cytoplasm. Its subcellular location is the cytoskeleton. It localises to the microtubule organizing center. It is found in the centrosome. This chain is Centrosomal protein of 112 kDa (Cep112), found in Mus musculus (Mouse).